Here is an 82-residue protein sequence, read N- to C-terminus: Large ribosomal subunit protein bL31B (82 aa).

The protein belongs to the bacterial ribosomal protein bL31 family. Type B subfamily. In terms of assembly, part of the 50S ribosomal subunit after the end of exponential growth.

Functionally, while neither of the L31 paralogs is essential, this protein does not seem to function as the main L31 protein. Has a higher affinity for 70S ribosomes than the zinc-containing L31 paralog; is able to displace it to varying extents, even under zinc-replete conditions. This Bacillus subtilis (strain 168) protein is Large ribosomal subunit protein bL31B (rpmE2).